We begin with the raw amino-acid sequence, 246 residues long: Ribonuclease 3 (246 aa).

The region spanning 18–147 (FQELQNKIGI…FIGALYLDQG (130 aa)) is the RNase III domain. A Mg(2+)-binding site is contributed by Glu60. Asp64 is a catalytic residue. Residues Asp133 and Glu136 each coordinate Mg(2+). Residue Glu136 is part of the active site. In terms of domain architecture, DRBM spans 173–242 (DFKSQLQELV…AQMALETLRA (70 aa)).

The protein belongs to the ribonuclease III family. As to quaternary structure, homodimer. The cofactor is Mg(2+).

Its subcellular location is the cytoplasm. The enzyme catalyses Endonucleolytic cleavage to 5'-phosphomonoester.. Its function is as follows. Digests double-stranded RNA. Involved in the processing of primary rRNA transcript to yield the immediate precursors to the large and small rRNAs (23S and 16S). Processes some mRNAs, and tRNAs when they are encoded in the rRNA operon. Processes pre-crRNA and tracrRNA of type II CRISPR loci if present in the organism. In Geobacillus kaustophilus (strain HTA426), this protein is Ribonuclease 3.